The primary structure comprises 297 residues: Large ribosomal subunit protein uL18 (297 aa).

An N-acetylglycine modification is found at glycine 2. N6-acetyllysine is present on residues lysine 5 and lysine 48. A Phosphoserine modification is found at serine 185. N6-acetyllysine; alternate is present on lysine 220. Residue lysine 220 forms a Glycyl lysine isopeptide (Lys-Gly) (interchain with G-Cter in SUMO1); alternate linkage. Lysine 220 participates in a covalent cross-link: Glycyl lysine isopeptide (Lys-Gly) (interchain with G-Cter in SUMO2); alternate. The residue at position 232 (threonine 232) is a Phosphothreonine. Residues 253-297 are disordered; it reads YEKKPKREVKKKRWNRPKMSLAQKKDRVAQKKASFLRAQERAAES. A compositionally biased stretch (basic residues) spans 258–268; that stretch reads KREVKKKRWNR. Serine 272 carries the post-translational modification Phosphoserine.

This sequence belongs to the universal ribosomal protein uL18 family. As to quaternary structure, component of the large ribosomal subunit (LSU). Part of the 5S RNP complex, which is a LSU subcomplex composed of the 5S RNA, RPL5 and RPL11. Component of a hexameric 5S RNP precursor complex, composed of 5S RNA, RRS1, RPF2/BXDC1, RPL5, RPL11 and HEATR3; this complex acts as a precursor for ribosome assembly. Interacts with isoform 1 of NVL in an ATP-dependent manner. Interacts with RRP1B. Interacts with IPO5, IPO7 and KPNB1; these interactions may be involved in RPL5 nuclear import for the assembly of ribosomal subunits.

It is found in the cytoplasm. The protein localises to the nucleus. Its subcellular location is the nucleolus. In terms of biological role, component of the ribosome, a large ribonucleoprotein complex responsible for the synthesis of proteins in the cell. The small ribosomal subunit (SSU) binds messenger RNAs (mRNAs) and translates the encoded message by selecting cognate aminoacyl-transfer RNA (tRNA) molecules. The large subunit (LSU) contains the ribosomal catalytic site termed the peptidyl transferase center (PTC), which catalyzes the formation of peptide bonds, thereby polymerizing the amino acids delivered by tRNAs into a polypeptide chain. The nascent polypeptides leave the ribosome through a tunnel in the LSU and interact with protein factors that function in enzymatic processing, targeting, and the membrane insertion of nascent chains at the exit of the ribosomal tunnel. As part of the 5S RNP/5S ribonucleoprotein particle it is an essential component of the LSU, required for its formation and the maturation of rRNAs. It also couples ribosome biogenesis to p53/TP53 activation. As part of the 5S RNP it accumulates in the nucleoplasm and inhibits MDM2, when ribosome biogenesis is perturbed, mediating the stabilization and the activation of TP53. The sequence is that of Large ribosomal subunit protein uL18 (RPL5) from Oryctolagus cuniculus (Rabbit).